Reading from the N-terminus, the 195-residue chain is Protein GrpE (195 aa).

It belongs to the GrpE family. In terms of assembly, homodimer.

Its subcellular location is the cytoplasm. Its function is as follows. Participates actively in the response to hyperosmotic and heat shock by preventing the aggregation of stress-denatured proteins, in association with DnaK and GrpE. It is the nucleotide exchange factor for DnaK and may function as a thermosensor. Unfolded proteins bind initially to DnaJ; upon interaction with the DnaJ-bound protein, DnaK hydrolyzes its bound ATP, resulting in the formation of a stable complex. GrpE releases ADP from DnaK; ATP binding to DnaK triggers the release of the substrate protein, thus completing the reaction cycle. Several rounds of ATP-dependent interactions between DnaJ, DnaK and GrpE are required for fully efficient folding. In Francisella tularensis subsp. tularensis (strain FSC 198), this protein is Protein GrpE.